A 235-amino-acid chain; its full sequence is Octanoyltransferase (235 aa).

One can recognise a BPL/LPL catalytic domain in the interval 37 to 220 (AGGPDTLLLL…AVNDALDGWL (184 aa)). Residues 78 to 85 (RGGKITWH), 150 to 152 (AIG), and 163 to 165 (GFA) each bind substrate. Cys181 acts as the Acyl-thioester intermediate in catalysis.

This sequence belongs to the LipB family.

It localises to the cytoplasm. It carries out the reaction octanoyl-[ACP] + L-lysyl-[protein] = N(6)-octanoyl-L-lysyl-[protein] + holo-[ACP] + H(+). The protein operates within protein modification; protein lipoylation via endogenous pathway; protein N(6)-(lipoyl)lysine from octanoyl-[acyl-carrier-protein]: step 1/2. Functionally, catalyzes the transfer of endogenously produced octanoic acid from octanoyl-acyl-carrier-protein onto the lipoyl domains of lipoate-dependent enzymes. Lipoyl-ACP can also act as a substrate although octanoyl-ACP is likely to be the physiological substrate. This Mycobacterium leprae (strain Br4923) protein is Octanoyltransferase.